Here is an 88-residue protein sequence, read N- to C-terminus: Small ribosomal subunit protein bS16c (88 aa).

Belongs to the bacterial ribosomal protein bS16 family.

The protein localises to the plastid. It is found in the chloroplast. The protein is Small ribosomal subunit protein bS16c of Helianthus annuus (Common sunflower).